The sequence spans 1463 residues: Collagen alpha-1(I) chain (1463 aa).

A signal peptide spans 1 to 22 (MFSFVDLRLLLLLAATALLTHG). The propeptide at 23 to 161 (QEEGQEEGQE…PPGLGGNFAP (139 aa)) is N-terminal propeptide. Residues 38–96 (VTCVQNGLRYHDRDVWKPVPCQICVCDNGNVLCDDVICDELKDCPNAKVPTDECCPVCP) enclose the VWFC domain. The interval 98–1217 (GQESPTDQET…AHDGGRYYRA (1120 aa)) is disordered. A compositionally biased stretch (pro residues) spans 138-153 (PGLPGPPGPPGPPGPP). A Pyrrolidone carboxylic acid modification is found at glutamine 162. Residues 162 to 177 (QLSYGYDEKSTGISVP) are nonhelical region (N-terminal). Position 170 is an allysine (lysine 170). The residue at position 171 (serine 171) is a Phosphoserine. The triple-helical region stretch occupies residues 178–1191 (GPMGPSGPRG…PGPPGPPGPP (1014 aa)). A 4-hydroxyproline mark is found at proline 189, proline 192, proline 195, proline 204, proline 207, proline 210, proline 225, proline 240, proline 246, proline 255, and proline 261. Residues 197–216 (PQGFQGPPGEPGEPGASGPM) are compositionally biased toward low complexity. The segment covering 228-242 (NGDDGEAGKPGRPGE) has biased composition (basic and acidic residues). Lysine 264 is modified (5-hydroxylysine; alternate). Lysine 264 carries O-linked (Gal...) hydroxylysine; alternate glycosylation. A Phosphoserine modification is found at serine 270. 5-hydroxylysine occurs at positions 276 and 285. Positions 278–294 (DAGPAGPKGEPGSPGEN) are enriched in low complexity. A 4-hydroxyproline mark is found at proline 288, proline 291, proline 297, proline 306, and proline 312. A compositionally biased stretch (low complexity) spans 317-330 (PAGARGNDGATGAA). Residues 332–344 (PPGPTGPAGPPGF) show a composition bias toward pro residues. 3 positions are modified to 4-hydroxyproline: proline 333, proline 342, and proline 345. Positions 349 to 358 (GAKGEGGPQG) are enriched in gly residues. A 4-hydroxyproline mark is found at proline 372, proline 375, proline 387, proline 393, proline 402, proline 408, proline 411, and proline 426. Residues 378–417 (AGAAGPAGNPGADGQPGAKGANGAPGIAGAPGFPGARGPS) are compositionally biased toward low complexity. Position 429 is a 5-hydroxylysine (lysine 429). Proline 435, proline 438, proline 450, proline 459, proline 474, proline 480, proline 489, and proline 495 each carry 4-hydroxyproline. Positions 484-493 (GERGGPGSRG) are enriched in gly residues. Positions 494–525 (FPGADGVAGPKGPAGERGAPGPAGPKGSPGEA) are enriched in low complexity. Lysine 504 carries the post-translational modification 5-hydroxylysine. A 4-hydroxyproline mark is found at proline 513, proline 522, proline 528, proline 534, proline 543, proline 546, proline 555, proline 564, proline 570, proline 582, proline 591, proline 600, proline 603, proline 621, proline 639, proline 645, proline 651, proline 657, proline 663, proline 669, proline 681, proline 690, proline 702, proline 714, proline 717, proline 723, proline 729, and proline 738. The span at 537–563 (KGLTGSPGSPGPDGKTGPPGPAGQDGR) shows a compositional bias: low complexity. Residues 572 to 591 (ARGQAGVMGFPGPKGAAGEP) are compositionally biased toward low complexity. Residues 633–660 (QGPAGSPGFQGLPGPAGPPGEAGKPGEQ) show a composition bias toward low complexity. A compositionally biased stretch (low complexity) spans 695-723 (PRGANGAPGNDGAKGDAGAPGAPGSQGAP). Residues 744-746 (RGD) carry the Cell attachment site motif. Lysine 750 is modified (5-hydroxylysine). Residues proline 756, proline 771, and proline 777 each carry the 4-hydroxyproline modification. Residues 783 to 797 (AGPSGPAGPTGARGA) are compositionally biased toward low complexity. Phosphoserine is present on serine 786. 4-hydroxyproline is present on residues proline 798, proline 804, proline 807, proline 816, proline 822, proline 840, proline 849, and proline 858. Positions 810–837 (AGFAGPPGADGQPGAKGEPGDAGAKGDA) are enriched in low complexity. A compositionally biased stretch (pro residues) spans 839–851 (PPGPAGPAGPPGP). The segment covering 852–882 (IGNVGAPGPKGARGSAGPPGATGFPGAAGRV) has biased composition (low complexity). Lysine 861 carries the 5-hydroxylysine modification. Residues proline 870 and proline 876 each carry the 4-hydroxyproline modification. Residue proline 884 is modified to 3-hydroxyproline. Proline 885, proline 894, proline 897, proline 918, proline 927, proline 936, proline 945, proline 963, proline 972, proline 975, proline 981, proline 996, proline 1002, proline 1008, proline 1017, and proline 1023 each carry 4-hydroxyproline. Low complexity predominate over residues 930-954 (AGEKGAPGADGPAGAPGTPGPQGIA). Residues 995-1005 (PPGPMGPPGLA) show a composition bias toward pro residues. At lysine 1032 the chain carries 5-hydroxylysine. The segment covering 1041–1056 (AGPPGAPGAPGAPGPV) has biased composition (pro residues). A 4-hydroxyproline mark is found at proline 1044, proline 1047, and proline 1050. Positions 1077–1091 (IGPVGARGPAGPQGP) are enriched in low complexity. Residues 1092–1094 (RGD) carry the Cell attachment site motif. Residues 1092–1106 (RGDKGETGEQGDRGI) are compositionally biased toward basic and acidic residues. At lysine 1095 the chain carries 5-hydroxylysine. Lysine 1107 carries the post-translational modification 5-hydroxylysine; alternate. The O-linked (Gal...) hydroxylysine; alternate glycan is linked to lysine 1107. Proline 1119, proline 1122, proline 1125, proline 1143, and proline 1158 each carry 4-hydroxyproline. Positions 1125-1149 (PGEQGPSGASGPAGPRGPPGSAGSP) are enriched in low complexity. Position 1163 is a 3-hydroxyproline (proline 1163). 4-hydroxyproline is present on proline 1164. Residues 1176–1191 (AGPPGPPGPPGPPGPP) are compositionally biased toward pro residues. Residue proline 1178 is modified to 3-hydroxyproline. Residue proline 1179 is modified to 4-hydroxyproline. At proline 1181 the chain carries 3-hydroxyproline. A 4-hydroxyproline modification is found at proline 1182. Position 1184 is a 3-hydroxyproline (proline 1184). Proline 1185, proline 1188, and proline 1191 each carry 4-hydroxyproline. Positions 1192–1215 (SGGYDLSFLPQPPQEKAHDGGRYY) are nonhelical region (C-terminal). Residues 1206 to 1217 (EKAHDGGRYYRA) are compositionally biased toward basic and acidic residues. Residue lysine 1207 is modified to Allysine. A propeptide spans 1218 to 1463 (DDANVVRDRD…GFDVGPACFL (246 aa)) (C-terminal propeptide). The Fibrillar collagen NC1 domain maps to 1228–1463 (LEVDTTLKSL…GFDVGPACFL (236 aa)). Disulfide bonds link cysteine 1258-cysteine 1290, cysteine 1298-cysteine 1461, and cysteine 1369-cysteine 1414. Ca(2+)-binding residues include aspartate 1276, asparagine 1278, glutamine 1279, cysteine 1281, and aspartate 1284.

The protein belongs to the fibrillar collagen family. In terms of assembly, trimers of one alpha 2(I) and two alpha 1(I) chains. Interacts with MRC2. Interacts with TRAM2. Interacts with MFAP4 in a Ca (2+)-dependent manner. Post-translationally, contains mostly 4-hydroxyproline. Proline residues at the third position of the tripeptide repeating unit (G-X-Y) are hydroxylated in some or all of the chains. In terms of processing, contains 3-hydroxyproline at a few sites. This modification occurs on the first proline residue in the sequence motif Gly-Pro-Hyp, where Hyp is 4-hydroxyproline. Lysine residues at the third position of the tripeptide repeating unit (G-X-Y) are 5-hydroxylated in some or all of the chains. Post-translationally, O-glycosylated on hydroxylated lysine residues. The O-linked glycan consists of a Glc-Gal disaccharide. Forms the fibrils of tendon, ligaments and bones. In bones the fibrils are mineralized with calcium hydroxyapatite.

It localises to the secreted. The protein resides in the extracellular space. Its subcellular location is the extracellular matrix. Functionally, type I collagen is a member of group I collagen (fibrillar forming collagen). The protein is Collagen alpha-1(I) chain (COL1A1) of Bos taurus (Bovine).